Reading from the N-terminus, the 377-residue chain is Cell division cycle-associated protein 7 (377 aa).

2 disordered regions span residues 58–113 (RTRS…EEDG) and 144–211 (IFSG…EEDK). Residues 76 to 100 (PARNTRRAANTKAAPPKPSESSAND) are compositionally biased toward low complexity. The interval 148–173 (RHSLPGHRTKDSKSPRRRTFPGVASR) is interaction with MYC. The short motif at 163–179 (RRRTFPGVASRRNPERR) is the Nuclear localization signal element. Thr166 carries the post-translational modification Phosphothreonine. Residue Ser193 is modified to Phosphoserine. Thr199 carries the phosphothreonine modification. The span at 199–210 (TEEEEDEEEEED) shows a compositional bias: acidic residues. Lys211 is covalently cross-linked (Glycyl lysine isopeptide (Lys-Gly) (interchain with G-Cter in SUMO2)). Residue Ser220 is modified to Phosphoserine. A mediates transcriptional activity region spans residues 253-377 (EEEIRNICSN…SLKQEFEMQA (125 aa)).

As to quaternary structure, interacts with MYC (via C-terminus), YWHAE and YWHAZ. In terms of processing, phosphorylation at Thr-166 promotes interaction with YWHAE and YWHAZ, dissociation from MYC and sequestration in the cytoplasm.

It localises to the nucleus. The protein localises to the cytoplasm. Participates in MYC-mediated cell transformation and apoptosis; induces anchorage-independent growth and clonogenicity in lymphoblastoid cells. Insufficient to induce tumorigenicity when overexpressed but contributes to MYC-mediated tumorigenesis. May play a role as transcriptional regulator. This chain is Cell division cycle-associated protein 7 (Cdca7), found in Rattus norvegicus (Rat).